A 1174-amino-acid chain; its full sequence is Lysylphosphatidylglycerol biosynthesis bifunctional protein LysX (1174 aa).

A phosphatidylglycerol lysyltransferase region spans residues 1–665 (MGVGLHLTVP…LLHHDGSAPD (665 aa)). The interval 9–36 (VPGLRRDGRGVQSNSHDTSSKTTADISR) is disordered. Residues 19 to 33 (VQSNSHDTSSKTTAD) show a composition bias toward polar residues. The next 7 membrane-spanning stretches (helical) occupy residues 82–102 (VPAA…LASV), 124–144 (FPDT…ALTA), 148–168 (IAWL…AAEI), 179–199 (FGEN…VLGY), 216–236 (AVWL…VELF), 274–294 (AIFG…LFLS), and 614–634 (VIPR…LPFS). The lysine--tRNA ligase stretch occupies residues 666-1174 (VSGLRQVGLT…TLPFPLAKPH (509 aa)). Positions 728-806 (VSVSGRIMRI…SLIVSGWRLI (79 aa)) form a DNA-binding region, OB. Residues D1086 and E1093 each coordinate Mg(2+).

It in the N-terminal section; belongs to the LPG synthetase family. The protein in the C-terminal section; belongs to the class-II aminoacyl-tRNA synthetase family. It depends on Mg(2+) as a cofactor.

Its subcellular location is the cell membrane. It carries out the reaction tRNA(Lys) + L-lysine + ATP = L-lysyl-tRNA(Lys) + AMP + diphosphate. The catalysed reaction is L-lysyl-tRNA(Lys) + a 1,2-diacyl-sn-glycero-3-phospho-(1'-sn-glycerol) = a 1,2-diacyl-sn-glycero-3-phospho-1'-(3'-O-L-lysyl)-sn-glycerol + tRNA(Lys). Its function is as follows. Catalyzes the production of L-lysyl-tRNA(Lys)transfer and the transfer of a lysyl group from L-lysyl-tRNA(Lys) to membrane-bound phosphatidylglycerol (PG), which produces lysylphosphatidylglycerol (LPG), one of the components of the bacterial membrane with a positive net charge. LPG synthesis contributes to the resistance to cationic antimicrobial peptides (CAMPs) and likely protects M.tuberculosis against the CAMPs produced by competiting microorganisms (bacteriocins). In fact, the modification of anionic phosphatidylglycerol with positively charged L-lysine results in repulsion of the peptides. The chain is Lysylphosphatidylglycerol biosynthesis bifunctional protein LysX (lysX) from Mycobacterium tuberculosis (strain KZN 1435 / MDR).